The chain runs to 90 residues: UPF0298 protein SSU98_1559 (90 aa).

It belongs to the UPF0298 family.

The protein resides in the cytoplasm. The chain is UPF0298 protein SSU98_1559 from Streptococcus suis (strain 98HAH33).